Reading from the N-terminus, the 103-residue chain is Phosphoribosyl-ATP pyrophosphatase (103 aa).

It belongs to the PRA-PH family.

It localises to the cytoplasm. It catalyses the reaction 1-(5-phospho-beta-D-ribosyl)-ATP + H2O = 1-(5-phospho-beta-D-ribosyl)-5'-AMP + diphosphate + H(+). It functions in the pathway amino-acid biosynthesis; L-histidine biosynthesis; L-histidine from 5-phospho-alpha-D-ribose 1-diphosphate: step 2/9. This is Phosphoribosyl-ATP pyrophosphatase (hisE) from Rhodobacter capsulatus (strain ATCC BAA-309 / NBRC 16581 / SB1003).